Here is an 883-residue protein sequence, read N- to C-terminus: Histidine--tRNA ligase, cytoplasmic (883 aa).

The protein belongs to the class-II aminoacyl-tRNA synthetase family.

Its subcellular location is the cytoplasm. The protein resides in the cytosol. The catalysed reaction is tRNA(His) + L-histidine + ATP = L-histidyl-tRNA(His) + AMP + diphosphate + H(+). The protein is Histidine--tRNA ligase, cytoplasmic of Arabidopsis thaliana (Mouse-ear cress).